The chain runs to 1632 residues: MQPKDYMSSSHANWENIQIDSFTSWINQHLSERGLSVKDLSVDFQDGVLLLNLLEILSGKKIARYVRSPKFLQHKIDNIMIAFNFMEKAFDIKVFGCNAKDIVDGNLKQTMGVIFLLIQKIKVNLHLDHLQEQQGETTGTTTTITSTNTTTTPTKPRFYRASMQVNAANRFSHISPNKDQSSSTVATTTTTSTSVVQPQPQPTTATPTTTTATTLTPPVASQQPVSTAPATVTPSTVIPTVTPLNTTTTTTTATSTSTNVPTATTNVPPTATTTTTGTRISPTTGVSVSTIRSKFLFEGGTGNTTGGNEKYNTYSPGSGNTSGVVGPSTSSSLNISSERVLKRTESGYLISGGLSLSGSGSGGIHEPLQRTVSLIEIKLNDHQSKFYDLKKIIFMQSVIRGYLVRSKWRNVLEKYKQHLNEYKKHFMNNKKAYRGLIRVQAIVKGKIQRKKLFKMFPLYRRNEIVKEILSTEDKYVTSLAMVTTHYLKPSEAFLSTQQVRSIFSQIEIIHRYNSLILEKLVSRNKIWYSSGQKIGDIFIEMSAFLKVYTIYVNNYNNSIQTITECMEIPKFASLLEKNRNQFGLDLSAFLIAPIQRIPRYILLLQDLLKNTKESHPDHQDLSLALKKMKDVAEYVNEKKREAENLNQVLTIQSSLTGKFNNLAEPHRRYVKKGTLISNDKIHLYFLFNDLLVKTENKIVSKIRDSARLSNNNSSDKNSKSTFHSPKEIINEGKSKYLNSYFLAGSSLVDSNPDGFTFQIIGVGDANELNSQINNQINNQNNNQNNNQNNNLNNNNDDSPILSFSPFSSSFASTITNSLSSIGNSNNVNNNNNTSSNSGFVNSSNNNINIVNSNGSSPLTNSGHGLNSSFGISSNNNNNLTMPTTSIQLEALSLNEKMTWMGELDECIFQLLEKSKSKKRSLITDADELTTVPFDISVVKDSEFSNVLEKKHSEISWRSKKFYLKNTHLYYHRYSSTESPKEPTKIKCINLILCSVKLAQVVDHPHCFQLITPSRIYFFSCEDSTVLFQWISLIRLSIKKKLESLKDENNNINNFTSIASATSPTSSSSNTTPIVVPIASHSNATGSLSASLGSSFLNQQQRSLEQQQHLNTSNSNLTPLALSSQVLYHINNFISTSTSTSASQSQSQSPSPSPSHSINQKQKIRKLSFYQSRSNTLININNDEDRLNSFPTSTLSVSCLLNNDNHGNNDFDGKSFTNNIDITTTTTTNDDNNNNTTTTQVKKGKDLSCSKELNCSISHDDNSKGSSGYGNNSCGDNINNDESNNNCAECGASDPSWVSINYGVVVCLDCSSIHKNLPEGNVKSVRSLSVAFSDIVKKQEGNIKANNKYEKNIPSGLTKPNPKDSYEIKLSWIKAKYINNNNNNNNSQNGDSTTPTPTPTSTTIHVNNDSTPTSPNLNSQSSPPPTATTTQTENVKLDNGRSSPTPTPTQTENNNNNVLTPTTTTTNTTTSTTTGSRPTTPTILNNEEEHIQGINLKDSTDTSNGKGTWSRGSSHAITERKTSFLDKPRVPVKKEHQGYLFKTSSPTSNNSSDWKKYLFVYKNDVLTYYKVSKKNKRKEKGIIDLFHSVKQESRPKQKYSFTLVTSQRLYFLASETEEEMKIWLDVLSSHTTH.

The 107-residue stretch at 16-122 (NIQIDSFTSW…VIFLLIQKIK (107 aa)) folds into the Calponin-homology (CH) domain. 2 disordered regions span residues 134–155 (QGETTGTTTTITSTNTTTTPTK) and 171–285 (FSHI…PTTG). Composition is skewed to low complexity over residues 137 to 154 (TTGTTTTITSTNTTTTPT) and 180 to 284 (QSSS…SPTT). 2 consecutive IQ domains span residues 388–417 (DLKKIIFMQSVIRGYLVRSKWRNVLEKYKQ) and 432–461 (AYRGLIRVQAIVKGKIQRKKLFKMFPLYRR). The DH domain occupies 460–638 (RRNEIVKEIL…KDVAEYVNEK (179 aa)). Low complexity predominate over residues 775–795 (QINNQNNNQNNNQNNNLNNNN). Residues 775–798 (QINNQNNNQNNNQNNNLNNNNDDS) are disordered. A PH 1 domain is found at 940-1038 (DSEFSNVLEK…WISLIRLSIK (99 aa)). The span at 1138 to 1156 (STSASQSQSQSPSPSPSHS) shows a compositional bias: low complexity. The interval 1138 to 1161 (STSASQSQSQSPSPSPSHSINQKQ) is disordered. Positions 1271–1389 (NSCGDNINND…NNNNNNSQNG (119 aa)) constitute an Arf-GAP domain. Residues 1286–1309 (CAECGASDPSWVSINYGVVVCLDC) form a C4-type zinc finger. Composition is skewed to low complexity over residues 1380–1402 (NNNNNNSQNGDSTTPTPTPTSTT), 1409–1431 (STPTSPNLNSQSSPPPTATTTQT), and 1441–1481 (SSPT…TTPT). Residues 1380 to 1521 (NNNNNNSQNG…SSHAITERKT (142 aa)) form a disordered region. Positions 1500–1515 (DTSNGKGTWSRGSSHA) are enriched in polar residues. One can recognise a PH 2 domain in the interval 1532–1631 (KKEHQGYLFK…WLDVLSSHTT (100 aa)).

The protein resides in the membrane. The protein localises to the cytoplasmic vesicle. Its subcellular location is the phagosome membrane. Its function is as follows. GTPase-activating protein for Rac involved in streaming and development. This is Guanine exchange factor for Rac 30 (gxcDD) from Dictyostelium discoideum (Social amoeba).